The primary structure comprises 391 residues: Superoxide dismutase [Fe] 1, chloroplastic (391 aa).

The transit peptide at 1–73 directs the protein to the chloroplast; the sequence is MAFATLVGVG…GESTNSRVLQ (73 aa). Positions 87–119 are enriched in acidic residues; it reads VNDGIDDETASDAEMDEDAEANGDESSGTDEDA. Residues 87–120 form a disordered region; the sequence is VNDGIDDETASDAEMDEDAEANGDESSGTDEDAS. Fe cation contacts are provided by His-148, His-202, Asp-301, and His-305. Residues 370–391 are disordered; it reads MPQQVNGDAREQTSGQEKSLGV. Over residues 381–391 the composition is skewed to polar residues; that stretch reads QTSGQEKSLGV.

It belongs to the iron/manganese superoxide dismutase family. Homodimer. It depends on Fe cation as a cofactor.

The protein resides in the plastid. Its subcellular location is the chloroplast. The enzyme catalyses 2 superoxide + 2 H(+) = H2O2 + O2. Functionally, destroys superoxide anion radicals which are normally produced within the cells and which are toxic to biological systems. The chain is Superoxide dismutase [Fe] 1, chloroplastic from Oryza sativa subsp. japonica (Rice).